A 184-amino-acid chain; its full sequence is ATP synthase subunit b, chloroplastic (184 aa).

The chain crosses the membrane as a helical span at residues 27 to 49 (LATNPINLSIVIGVLIFFGKGVL).

This sequence belongs to the ATPase B chain family. F-type ATPases have 2 components, F(1) - the catalytic core - and F(0) - the membrane proton channel. F(1) has five subunits: alpha(3), beta(3), gamma(1), delta(1), epsilon(1). F(0) has four main subunits: a(1), b(1), b'(1) and c(10-14). The alpha and beta chains form an alternating ring which encloses part of the gamma chain. F(1) is attached to F(0) by a central stalk formed by the gamma and epsilon chains, while a peripheral stalk is formed by the delta, b and b' chains.

It is found in the plastid. It localises to the chloroplast thylakoid membrane. In terms of biological role, f(1)F(0) ATP synthase produces ATP from ADP in the presence of a proton or sodium gradient. F-type ATPases consist of two structural domains, F(1) containing the extramembraneous catalytic core and F(0) containing the membrane proton channel, linked together by a central stalk and a peripheral stalk. During catalysis, ATP synthesis in the catalytic domain of F(1) is coupled via a rotary mechanism of the central stalk subunits to proton translocation. Functionally, component of the F(0) channel, it forms part of the peripheral stalk, linking F(1) to F(0). The polypeptide is ATP synthase subunit b, chloroplastic (Lotus japonicus (Lotus corniculatus var. japonicus)).